The sequence spans 599 residues: Elongation factor 4 (599 aa).

The region spanning 5 to 187 (NRIRNFSIVA…AIVTRLPAPK (183 aa)) is the tr-type G domain. GTP is bound by residues 17 to 22 (DHGKST) and 134 to 137 (NKVD).

It belongs to the TRAFAC class translation factor GTPase superfamily. Classic translation factor GTPase family. LepA subfamily.

Its subcellular location is the cell inner membrane. It carries out the reaction GTP + H2O = GDP + phosphate + H(+). In terms of biological role, required for accurate and efficient protein synthesis under certain stress conditions. May act as a fidelity factor of the translation reaction, by catalyzing a one-codon backward translocation of tRNAs on improperly translocated ribosomes. Back-translocation proceeds from a post-translocation (POST) complex to a pre-translocation (PRE) complex, thus giving elongation factor G a second chance to translocate the tRNAs correctly. Binds to ribosomes in a GTP-dependent manner. The polypeptide is Elongation factor 4 (Jannaschia sp. (strain CCS1)).